A 367-amino-acid polypeptide reads, in one-letter code: MESAASHIIVRTPVIDSIGELYETRGLGKKSVVLFDENTRKLYGDKIIASMQRQGFRTVELVVPARETSKSVSTAWKLYGQMIETDVDRSWNLLCVGGGVVGDLGGYIAASYYRGIPVVQLPTTLLAMTDSSIGGKVAINHPLGKNLIGYFHMPALVLIDPAFLRTLPAREIFGGMAEVVKYGFIADRKFFDMLAEHWDEVTRLEEPWISDAVSRSAFTKADVVEKDFRETSGLRATLNFGHTFAHGLEKMAEYRNLRHGEAVTIGMACALYLSYRLGFLAEAELNEGLALIARFRFPRNLVNKRFISLDLEELFDAMHSDKKKIDKQLRFVLLDRIGHAFLHDREVPKADVLHAIDDAQRWFSEKR.

Residues 99-103, 123-124, Lys136, Lys145, and 163-166 contribute to the NAD(+) site; these read GVVGD, TT, and FLRT. Residues Glu178, His242, and His259 each contribute to the Zn(2+) site.

It belongs to the sugar phosphate cyclases superfamily. Dehydroquinate synthase family. Co(2+) serves as cofactor. The cofactor is Zn(2+). Requires NAD(+) as cofactor.

Its subcellular location is the cytoplasm. The catalysed reaction is 7-phospho-2-dehydro-3-deoxy-D-arabino-heptonate = 3-dehydroquinate + phosphate. Its pathway is metabolic intermediate biosynthesis; chorismate biosynthesis; chorismate from D-erythrose 4-phosphate and phosphoenolpyruvate: step 2/7. Catalyzes the conversion of 3-deoxy-D-arabino-heptulosonate 7-phosphate (DAHP) to dehydroquinate (DHQ). This chain is 3-dehydroquinate synthase, found in Chlorobaculum parvum (strain DSM 263 / NCIMB 8327) (Chlorobium vibrioforme subsp. thiosulfatophilum).